Here is a 278-residue protein sequence, read N- to C-terminus: Dermonecrotic toxin LlSicTox-alphaIII3ii (278 aa).

His-5 is a catalytic residue. Positions 25 and 27 each coordinate Mg(2+). His-40 acts as the Nucleophile in catalysis. Cys-44 and Cys-50 are oxidised to a cystine. Position 84 (Asp-84) interacts with Mg(2+).

It belongs to the arthropod phospholipase D family. Class I subfamily. Requires Mg(2+) as cofactor. Expressed by the venom gland.

The protein resides in the secreted. It catalyses the reaction an N-(acyl)-sphingosylphosphocholine = an N-(acyl)-sphingosyl-1,3-cyclic phosphate + choline. The catalysed reaction is an N-(acyl)-sphingosylphosphoethanolamine = an N-(acyl)-sphingosyl-1,3-cyclic phosphate + ethanolamine. It carries out the reaction a 1-acyl-sn-glycero-3-phosphocholine = a 1-acyl-sn-glycero-2,3-cyclic phosphate + choline. The enzyme catalyses a 1-acyl-sn-glycero-3-phosphoethanolamine = a 1-acyl-sn-glycero-2,3-cyclic phosphate + ethanolamine. Its function is as follows. Dermonecrotic toxins cleave the phosphodiester linkage between the phosphate and headgroup of certain phospholipids (sphingolipid and lysolipid substrates), forming an alcohol (often choline) and a cyclic phosphate. This toxin acts on sphingomyelin (SM). It may also act on ceramide phosphoethanolamine (CPE), lysophosphatidylcholine (LPC) and lysophosphatidylethanolamine (LPE), but not on lysophosphatidylserine (LPS), and lysophosphatidylglycerol (LPG). It acts by transphosphatidylation, releasing exclusively cyclic phosphate products as second products. Induces dermonecrosis, hemolysis, increased vascular permeability, edema, inflammatory response, and platelet aggregation. The sequence is that of Dermonecrotic toxin LlSicTox-alphaIII3ii from Loxosceles laeta (South American recluse spider).